The primary structure comprises 1022 residues: MATMLSKELQDIESILALNPRVKSHANVHSTASKKNEKKHWKRNPERSCDSCVNLENNFDDIKHTTLSERGALREALRCLKCADAPCQKSCPTNLDIKSFITSISNKNYYGAAKAILSDNPLGLTCGMVCPTSDLCVGGCNLYASEEGPINIGGLQQFATEVFSKMGIPQIRNPELPTADNMPKSFHTRIALIGCGPASISCASFLARLGYDNITIFEKQKYIGGLSTSEIPQFRLPYEVVQFEIDLMKDLGVKVVLEKGLGQNGLTLTSLKEEGYQVVYIGIGLPQANRDKIFEGLTTEQGFYTSKDFLPLVAKASKIGMCNCRSQLPKLHGNVIVLGAGDTAFDCATSALRCGARRVFVVFRKGFTNIRAVPEEMEAAKEEKCEFLPFLSPHEVIKKNGRVSGLRFCRTEQQDDGTWIVDEEQIVHLKADFIISAFGSMLNDPAVTKALDPIKLNRWGTPEVNSETMQTTEPWVFAGGDIAGFANTTVESVNDGKQASWHIHKYIQSLHGNTISATPRLPLFHCSIDTVDISVEMCGIKFPNPFGLASAPPTTSAAMIRRAFEQGWGFALTKTFGLDKDLVTNVSPRIVRGTTSGHIFGPGQGSFLNIELISEKTAAYWCKSVAELKADFPKNIIIASIMCSYNQADWTELAKMAQESQADALELNLSCPHGMGERGMGLACGQDPELVRNICRWVRKATSIPFFAKLTPNVTNIVDIATAAYEGGADGVTATNTVSGLMALKADATPWPGIGRGARTTYGGVSGNAIRPIALRAVSAIARALPGFPILATGGIDSAESGLQFLHAGASVLQVCSAVQNQDFTVIEDYCLGLKALLYLKSIEELHDWDGQSPPTIRHQKGKPVPHVSELIGKSLPSFGPYLQTKTQALAKYKKDASGDVIMDTGAARVNIPKKPIPNVKDVIARALKHIGAYQELDNTEQVQALVDPEMCINCGKCYMTCNDSGYQAIKFDPETHLPVITDSCTGCTLCLSVCPIIDCIKMVSRTTPYEPKRGLPVNPVC.

Positions 26–45 (ANVHSTASKKNEKKHWKRNP) are disordered. Positions 69–100 (ERGALREALRCLKCADAPCQKSCPTNLDIKSF) constitute a 4Fe-4S ferredoxin-type 1 domain. Cysteine 79, cysteine 82, cysteine 87, and cysteine 91 together coordinate [4Fe-4S] cluster. Valine 129 contacts FAD. The [4Fe-4S] cluster site is built by cysteine 130, cysteine 136, cysteine 140, and glutamine 156. FAD-binding positions include 194-198 (GCGPA), 218-226 (EKQKYIGGL), arginine 235, and leucine 261. Residues 340 to 343 (AGDT), 364 to 365 (RK), arginine 371, 437 to 439 (AFG), and 481 to 487 (DIAGFAN) contribute to the NADP(+) site. Residue 480 to 489 (GDIAGFANTT) coordinates FAD. Residues serine 550 and 574–575 (KT) contribute to the FMN site. Residues asparagine 609 and 668 to 670 (NLS) contribute to the substrate site. Cysteine 671 acts as the Proton acceptor in catalysis. Position 709 (lysine 709) interacts with FMN. Residue 736–737 (NT) participates in substrate binding. FMN contacts are provided by residues glycine 767, 793–795 (TGG), and 816–817 (CS). 2 consecutive 4Fe-4S ferredoxin-type domains span residues 943 to 975 (VQAL…FDPE) and 976 to 1006 (THLP…MVSR). 8 residues coordinate [4Fe-4S] cluster: cysteine 952, cysteine 955, cysteine 958, cysteine 962, cysteine 985, cysteine 988, cysteine 991, and cysteine 995.

This sequence belongs to the dihydropyrimidine dehydrogenase family. In terms of assembly, homodimer. It depends on FAD as a cofactor. The cofactor is FMN. [4Fe-4S] cluster serves as cofactor.

Its subcellular location is the cytoplasm. It catalyses the reaction 5,6-dihydrouracil + NADP(+) = uracil + NADPH + H(+). The catalysed reaction is 5,6-dihydrothymine + NADP(+) = thymine + NADPH + H(+). The protein operates within amino-acid biosynthesis; beta-alanine biosynthesis. Involved in pyrimidine base degradation. Catalyzes the reduction of uracil and thymine. Also involved the degradation of the chemotherapeutic drug 5-fluorouracil. The sequence is that of Dihydropyrimidine dehydrogenase [NADP(+)] (dpyd) from Danio rerio (Zebrafish).